A 729-amino-acid chain; its full sequence is Solute carrier family 15 member 2 (729 aa).

Residues 1-34 (MNPFQKNESKETLFSPVSIEEVPPRPPSPPKKPS) form a disordered region. Residues 1–57 (MNPFQKNESKETLFSPVSIEEVPPRPPSPPKKPSPTICGSNYPLSIAFIVVNEFCER) are Cytoplasmic-facing. Ser9 is subject to Phosphoserine. A Phosphothreonine modification is found at Thr12. Residues 24 to 33 (PRPPSPPKKP) are compositionally biased toward pro residues. At Ser28 the chain carries Phosphoserine. The helical transmembrane segment at 58–78 (FSYYGMKAVLILYFLYFLHWN) threads the bilayer. At 79-83 (EDTST) the chain is on the extracellular side. A helical membrane pass occupies residues 84 to 104 (SIYHAFSSLCYFTPILGAAIA). The Cytoplasmic segment spans residues 105 to 113 (DSWLGKFKT). The helical transmembrane segment at 114–134 (IIYLSLVYVLGHVIKSLGALP) threads the bilayer. Residues 135–139 (ILGGQ) lie on the Extracellular side of the membrane. The chain crosses the membrane as a helical span at residues 140–160 (VVHTVLSLIGLSLIALGTGGI). At 161 to 183 (KPCVAAFGGDQFEEKHAEERTRY) the chain is on the cytoplasmic side. Residues 184 to 204 (FSVFYLSINAGSLISTFITPM) form a helical membrane-spanning segment. Topologically, residues 205–217 (LRGDVQCFGEDCY) are extracellular. A helical membrane pass occupies residues 218 to 238 (ALAFGVPGLLMVIALVVFAMG). The Cytoplasmic portion of the chain corresponds to 239 to 295 (SKIYNKPPPEGNIVAQVFKCIWFAISNRFKNRSGDIPKRQHWLDWAAEKYPKQLIMD). A helical transmembrane segment spans residues 296–316 (VKALTRVLFLYIPLPMFWALL). Residues 317 to 343 (DQQGSRWTLQAIRMNRNLGFFVLQPDQ) are Extracellular-facing. A helical membrane pass occupies residues 344-364 (MQVLNPLLVLIFIPLFDFVIY). The Cytoplasmic portion of the chain corresponds to 365–380 (RLVSKCGINFSSLRKM). A helical transmembrane segment spans residues 381–401 (AVGMILACLAFAVAAAVEIKI). Residues 402 to 611 (NEMAPAQPGP…PANKMSIAWQ (210 aa)) lie on the Extracellular side of the membrane. The interval 402 to 611 (NEMAPAQPGP…PANKMSIAWQ (210 aa)) is extracellular domain (ECD). N-linked (GlcNAc...) asparagine glycans are attached at residues Asn435, Asn472, Asn528, Asn567, and Asn587. Residues 612–632 (LPQYALVTAGEVMFSVTGLEF) traverse the membrane as a helical segment. Topologically, residues 633-643 (SYSQAPSSMKS) are cytoplasmic. The chain crosses the membrane as a helical span at residues 644 to 664 (VLQAAWLLTIAVGNIIVLVVA). Topologically, residues 665-674 (QFSGLVQWAE) are extracellular. The chain crosses the membrane as a helical span at residues 675–695 (FILFSCLLLVICLIFSIMGYY). At 696–729 (YVPVKTEDMRGPADKHIPHIQGNMIKLETKKTKL) the chain is on the cytoplasmic side.

This sequence belongs to the major facilitator superfamily. Proton-dependent oligopeptide transporter (POT/PTR) (TC 2.A.17) family. As to quaternary structure, interacts (via extracellular domain region) with trypsin. Expressed in kidney. Not detected in intestine. Highly expressed in macrophages.

It localises to the apical cell membrane. It is found in the cytoplasmic vesicle. The protein localises to the phagosome membrane. Its subcellular location is the cell membrane. It carries out the reaction a dipeptide(out) + 2 H(+)(out) = a dipeptide(in) + 2 H(+)(in). The enzyme catalyses N-acetyl-D-muramoyl-L-alanyl-D-isoglutamine(out) + 3 H(+)(out) = N-acetyl-D-muramoyl-L-alanyl-D-isoglutamine(in) + 3 H(+)(in). The catalysed reaction is glycyl-L-leucine(out) + 2 H(+)(out) = glycyl-L-leucine(in) + 2 H(+)(in). It catalyses the reaction glycyl-L-lysine(out) + 2 H(+)(out) = glycyl-L-lysine(in) + 2 H(+)(in). It carries out the reaction glycyl-L-glutamate(out) + 3 H(+)(out) = glycyl-L-glutamate(in) + 3 H(+)(in). The enzyme catalyses L-alanyl-L-alanine(out) + 2 H(+)(out) = L-alanyl-L-alanine(in) + 2 H(+)(in). The catalysed reaction is an L-amino acid tripeptide(out) + 2 H(+)(out) = an L-amino acid tripeptide(in) + 2 H(+)(in). It catalyses the reaction carnosine(out) + 2 H(+)(out) = carnosine(in) + 2 H(+)(in). In terms of biological role, proton-coupled amino-acid transporter that transports oligopeptides of 2 to 4 amino acids with a preference for dipeptides. Transports neutral and anionic dipeptides with a proton to peptide stoichiometry of 2:1 or 3:1. In kidney, involved in the absorption of circulating di- and tripeptides from the glomerular filtrate. Can also transport beta-lactam antibiotics, such as the aminocephalosporin cefadroxil, and other antiviral and anticancer drugs. Transports the dipeptide-like aminopeptidase inhibitor bestatin. Also able to transport carnosine. Involved in innate immunity by promoting the detection of microbial pathogens by NOD-like receptors (NLRs). Mediates transport of bacterial peptidoglycans across the plasma membrane or, in macrophages, the phagosome membrane: catalyzes the transport of certain bacterial peptidoglycans, such as muramyl dipeptide (MDP), the NOD2 ligand. The sequence is that of Solute carrier family 15 member 2 from Homo sapiens (Human).